A 605-amino-acid polypeptide reads, in one-letter code: uncharacterized protein (605 aa).

Residues 56 to 78 (ILWSSIAAACVILFAAYKTGAYF) form a helical membrane-spanning segment.

The protein localises to the cell membrane. This is an uncharacterized protein from Bacillus subtilis (strain 168).